A 234-amino-acid polypeptide reads, in one-letter code: Sugar fermentation stimulation protein homolog (234 aa).

This sequence belongs to the SfsA family.

The sequence is that of Sugar fermentation stimulation protein homolog from Shewanella sp. (strain ANA-3).